The primary structure comprises 638 residues: MFIKRSDYASAYLKIKEASVSGGCTVQLFVALDPDALCACKLLSTLLKGDFISHKIRPVSGYRDLEQANKTLLEQNEDIKFIILLNCGTMVDLNNYLVSMEDVSIYVIDSHRPHNLNNIYIENNIFVFDDGDIEEDMNKIHDAWYAFNSHELSDEENSDSSNEREEEVEDDNRSVESYSSSDYQARSRRRFSEETTQRRAEIKEKRKKRKEFASILSEYYEKGSWYGESITNILFAVASMLGREDNDMLWLAIVGLTCLEIHCQSSKKYFNRSYSLLKDEVNRLNPSPLENQIVGRAHGKTPHDQSIRLEDEFRFMLVRHWSLYDSMLHSAYVGSRLHIWSEEGRKRLHKLLAKMGLSLVECKQTYIHMNMDLKKTLKSSLKRFAPFYGLDDVIFHSFTRTYGFKCTLSASDVSYAISALLEMGNTGVLLQSKTVARSPDMTEEEYLEKFENAQNQEWLHNFYDAYDALDDVDSLERALKLAMHLQRAIVRTGITLLEKRAIKTLRSFRFGLINEGPDLKIFMHPLALTKMSLWIAEAINEQEREFGKLRHLPLVLAAFVEEKNRYLIVGTSTSAFTSNEDDDDDDGHGHNRFGVAFQEVANMTSATLQMDCFEASVIECQKSDLGVFLESLSFKTLL.

The interval 151 to 204 (ELSDEENSDSSNEREEEVEDDNRSVESYSSSDYQARSRRRFSEETTQRRAEIKE) is disordered. Positions 153–170 (SDEENSDSSNEREEEVED) are enriched in acidic residues. Basic and acidic residues predominate over residues 190–204 (RFSEETTQRRAEIKE).

The protein belongs to the CDC45 family. Interacts with sld3.

The protein resides in the nucleus. Functionally, required for initiation of chromosomal DNA replication. May have a role in regulating the MCM proteins nda1 and nda4. This Schizosaccharomyces pombe (strain 972 / ATCC 24843) (Fission yeast) protein is Cell division control protein 45 homolog (sna41).